Here is a 348-residue protein sequence, read N- to C-terminus: Phosphate acyltransferase (348 aa).

It belongs to the PlsX family. As to quaternary structure, homodimer. Probably interacts with PlsY.

Its subcellular location is the cytoplasm. The enzyme catalyses a fatty acyl-[ACP] + phosphate = an acyl phosphate + holo-[ACP]. Its pathway is lipid metabolism; phospholipid metabolism. Functionally, catalyzes the reversible formation of acyl-phosphate (acyl-PO(4)) from acyl-[acyl-carrier-protein] (acyl-ACP). This enzyme utilizes acyl-ACP as fatty acyl donor, but not acyl-CoA. The chain is Phosphate acyltransferase from Synechocystis sp. (strain ATCC 27184 / PCC 6803 / Kazusa).